A 71-amino-acid chain; its full sequence is uncharacterized protein (71 aa).

The signal sequence occupies residues 1-21; it reads MGVGLHGDHVGGELNSANAFT.

This is an uncharacterized protein from Haemophilus influenzae (strain ATCC 51907 / DSM 11121 / KW20 / Rd).